The sequence spans 254 residues: Sulfoacetaldehyde reductase (254 aa).

8–32 (FITGATSGFGEAAAQVFADAGWSLV) serves as a coordination point for NADP(+). Position 141 (S141) interacts with substrate. Y154 functions as the Proton acceptor in the catalytic mechanism.

The protein belongs to the short-chain dehydrogenases/reductases (SDR) family. In terms of assembly, homodimer and heterotetramer.

The enzyme catalyses 2-hydroxyethane-1-sulfonate + NADP(+) = sulfoacetaldehyde + NADPH + H(+). It functions in the pathway organosulfur degradation. In terms of biological role, catalyzes the formation of isethionate from 2-sulfoacetaldehyde in the deaminative pathway of taurine. The enzyme is specific for NADPH; NADH is not a substrate. The polypeptide is Sulfoacetaldehyde reductase (isfD) (Klebsiella oxytoca).